Reading from the N-terminus, the 471-residue chain is Metalloprotease TIKI homolog (471 aa).

The signal sequence occupies residues 1–24 (MAAFTLWILVLNVFLLGFQARKLA). At 25-449 (SNLKFPIQKC…SRKAAASCTP (425 aa)) the chain is on the extracellular side. N226, N235, N284, and N342 each carry an N-linked (GlcNAc...) asparagine glycan. The span at 369 to 402 (KAKKSLNTRRERRKGCRGRRKKSKRCQKKKKRKR) shows a compositional bias: basic residues. The disordered stretch occupies residues 369–406 (KAKKSLNTRRERRKGCRGRRKKSKRCQKKKKRKRPDYS). Residues 450 to 470 (IWTVSLALTCAVTCLLTYSGF) traverse the membrane as a helical segment. R471 is a topological domain (cytoplasmic).

This sequence belongs to the TIKI family. It depends on Mn(2+) as a cofactor. Co(2+) serves as cofactor.

The protein resides in the membrane. Functionally, metalloprotease. In Nematostella vectensis (Starlet sea anemone), this protein is Metalloprotease TIKI homolog.